The primary structure comprises 206 residues: MIDFDGYRPNVGIVICNKAGQVLWAKRFGQNSWQFPQGGINEGENIETAMYRELYEEVGLTKKDVRLLWASKYWLKYKLPKRLVRSDGSQPVCIGQKQRWFLLQLLSDENLIDLKTTKSPEFDGWRWVSFWYPVRQVVSFKRDVYRKVMKEFAGVLLNESKKPETVEKPRVERTEKRDFQKRDNQKREFRKSARTWNNSHQKGKAQ.

In terms of domain architecture, Nudix hydrolase spans 6–150; it reads GYRPNVGIVI…KRDVYRKVMK (145 aa). The Nudix box signature appears at 38–59; sequence GGINEGENIETAMYRELYEEVG. Residues 162-191 are compositionally biased toward basic and acidic residues; it reads KPETVEKPRVERTEKRDFQKRDNQKREFRK. Residues 162–206 are disordered; sequence KPETVEKPRVERTEKRDFQKRDNQKREFRKSARTWNNSHQKGKAQ.

Belongs to the Nudix hydrolase family. RppH subfamily. It depends on a divalent metal cation as a cofactor.

Its function is as follows. Accelerates the degradation of transcripts by removing pyrophosphate from the 5'-end of triphosphorylated RNA, leading to a more labile monophosphorylated state that can stimulate subsequent ribonuclease cleavage. The protein is RNA pyrophosphohydrolase of Actinobacillus pleuropneumoniae serotype 3 (strain JL03).